Here is a 502-residue protein sequence, read N- to C-terminus: Probable cytosol aminopeptidase (502 aa).

Lysine 267 and aspartate 272 together coordinate Mn(2+). Lysine 279 is a catalytic residue. 3 residues coordinate Mn(2+): aspartate 290, aspartate 349, and glutamate 351. Arginine 353 is a catalytic residue.

This sequence belongs to the peptidase M17 family. Mn(2+) is required as a cofactor.

It is found in the cytoplasm. The enzyme catalyses Release of an N-terminal amino acid, Xaa-|-Yaa-, in which Xaa is preferably Leu, but may be other amino acids including Pro although not Arg or Lys, and Yaa may be Pro. Amino acid amides and methyl esters are also readily hydrolyzed, but rates on arylamides are exceedingly low.. It catalyses the reaction Release of an N-terminal amino acid, preferentially leucine, but not glutamic or aspartic acids.. Its function is as follows. Presumably involved in the processing and regular turnover of intracellular proteins. Catalyzes the removal of unsubstituted N-terminal amino acids from various peptides. The chain is Probable cytosol aminopeptidase from Aeromonas salmonicida (strain A449).